The chain runs to 496 residues: Glutamate--cysteine ligase B, chloroplastic (496 aa).

The N-terminal 34 residues, Met1–Pro34, are a transit peptide targeting the chloroplast. The interval Pro14–Thr53 is disordered. Over residues Pro29–Gly38 the composition is skewed to low complexity. Cys160 and Cys380 form a disulfide bridge.

Belongs to the carboxylate-amine ligase family. Glutamate--cysteine ligase type 2 subfamily. In terms of assembly, homodimer or monomer when oxidized or reduced, respectively. Post-translationally, the Cys-160-Cys-380 disulfide bridge is known to modulate the enzyme activity according to the redox status. The oxidized form constitutes the active enzyme.

The protein resides in the plastid. It is found in the chloroplast. It carries out the reaction L-cysteine + L-glutamate + ATP = gamma-L-glutamyl-L-cysteine + ADP + phosphate + H(+). Its pathway is sulfur metabolism; glutathione biosynthesis; glutathione from L-cysteine and L-glutamate: step 1/2. This chain is Glutamate--cysteine ligase B, chloroplastic (GSH1-2), found in Oryza sativa subsp. japonica (Rice).